We begin with the raw amino-acid sequence, 1091 residues long: Protein diaphanous (1091 aa).

Positions 1–37 (MSRHEKTKSTGGGLLDSLFGRPSKSKGGTISSGTLAH) are disordered. Positions 1-56 (MSRHEKTKSTGGGLLDSLFGRPSKSKGGTISSGTLAHGGRPVSADNYVVPGVEDFE) are basic region. Residues 25–34 (SKGGTISSGT) are compositionally biased toward low complexity. Positions 59–431 (IQQLSVAELD…QIVFHKGYCD (373 aa)) constitute a GBD/FH3 domain. Residues 455-496 (KAKESKRSEEYEKKIEQLESAKQEAEAKAAHLEEKVKLMEAN) adopt a coiled-coil conformation. Disordered regions lie at residues 499 to 589 (AAPS…MMMG), 994 to 1021 (RLQE…DMDA), and 1039 to 1072 (GSAF…RTRV). Over residues 512–572 (PMPPPPPGGG…MGGPPPPPMP (61 aa)) the composition is skewed to pro residues. In terms of domain architecture, FH1 spans 512–596 (PMPPPPPGGG…MMGPMVPVLP (85 aa)). One can recognise an FH2 domain in the interval 601-1001 (PKKKWDVKNP…KRRLQEAREQ (401 aa)). The span at 994-1010 (RLQEAREQSAREQQERQ) shows a compositional bias: basic and acidic residues. Positions 1022–1054 (PQTQEGVMDSLLEALQTGSAFGQRNRQARRQRP) constitute a DAD domain.

It belongs to the formin homology family. Diaphanous subfamily. In terms of assembly, may interact (via CBD/FH3 domain) with Rho1.

The protein resides in the cytoplasm. Its subcellular location is the cytoskeleton. It localises to the cleavage furrow. The protein localises to the apical cell membrane. Functionally, required for cytokinesis in both mitosis and meiosis. Has a role in actin cytoskeleton organization and is essential for many, if not all, actin-mediated events involving membrane invagination. May serve as a mediator between signaling molecules and actin organizers at specific phases of the cell cycle. Possible component of the contractile ring or may control its function. The protein is Protein diaphanous (dia) of Drosophila melanogaster (Fruit fly).